We begin with the raw amino-acid sequence, 322 residues long: Delta-aminolevulinic acid dehydratase (322 aa).

3 residues coordinate Zn(2+): C120, C122, and C130. The active-site Schiff-base intermediate with substrate is the K195. 5-aminolevulinate is bound by residues R205 and R217. E233 serves as a coordination point for Mg(2+). The active-site Schiff-base intermediate with substrate is the K248. Residues S274 and Y312 each contribute to the 5-aminolevulinate site.

The protein belongs to the ALAD family. In terms of assembly, homooctamer. Zn(2+) is required as a cofactor.

It carries out the reaction 2 5-aminolevulinate = porphobilinogen + 2 H2O + H(+). The protein operates within porphyrin-containing compound metabolism; protoporphyrin-IX biosynthesis; coproporphyrinogen-III from 5-aminolevulinate: step 1/4. Its function is as follows. Catalyzes an early step in the biosynthesis of tetrapyrroles. Binds two molecules of 5-aminolevulinate per subunit, each at a distinct site, and catalyzes their condensation to form porphobilinogen. The sequence is that of Delta-aminolevulinic acid dehydratase (hemB) from Archaeoglobus fulgidus (strain ATCC 49558 / DSM 4304 / JCM 9628 / NBRC 100126 / VC-16).